The chain runs to 184 residues: NADH-quinone oxidoreductase subunit B (184 aa).

Positions 37, 38, 103, and 132 each coordinate [4Fe-4S] cluster.

It belongs to the complex I 20 kDa subunit family. As to quaternary structure, NDH-1 is composed of 14 different subunits. Subunits NuoB, C, D, E, F, and G constitute the peripheral sector of the complex. [4Fe-4S] cluster serves as cofactor.

It localises to the cell membrane. It catalyses the reaction a quinone + NADH + 5 H(+)(in) = a quinol + NAD(+) + 4 H(+)(out). NDH-1 shuttles electrons from NADH, via FMN and iron-sulfur (Fe-S) centers, to quinones in the respiratory chain. The immediate electron acceptor for the enzyme in this species is believed to be a menaquinone. Couples the redox reaction to proton translocation (for every two electrons transferred, four hydrogen ions are translocated across the cytoplasmic membrane), and thus conserves the redox energy in a proton gradient. This chain is NADH-quinone oxidoreductase subunit B, found in Mycolicibacterium smegmatis (strain ATCC 700084 / mc(2)155) (Mycobacterium smegmatis).